Consider the following 470-residue polypeptide: Probable tocopherol cyclase, chloroplastic (470 aa).

The transit peptide at 1–61 (MDLAAAAVAV…APTPRDRALR (61 aa)) directs the protein to the chloroplast. The segment at 14–48 (RPAPPPRRCAPRRHRRALAPRAASSSPSPSTAVAA) is disordered. A compositionally biased stretch (basic residues) spans 22 to 31 (CAPRRHRRAL). A compositionally biased stretch (low complexity) spans 32-48 (APRAASSSPSPSTAVAA).

In terms of tissue distribution, expressed in the roots, stems, leaves and spikelets.

It localises to the plastid. The protein localises to the chloroplast. Its subcellular location is the plastoglobule. The protein operates within cofactor biosynthesis; tocopherol biosynthesis. In terms of biological role, involved in the synthesis of both tocopherols and tocotrienols (vitamin E), which presumably protect photosynthetic complexes from oxidative stress. Catalyzes the conversion of 2-methyl-6-phytyl-1,4-hydroquinone and 2,3-dimethyl-5-phytyl-1,4-hydroquinone (DMPQ) to delta- and gamma-tocopherol respectively. Also converts 2,3-dimethyl-5-geranylgeranyl-1,4-hydroquinone (DMGQ) to gamma-tocotrienol. This is Probable tocopherol cyclase, chloroplastic (VTE1) from Oryza sativa subsp. japonica (Rice).